The following is a 271-amino-acid chain: NH(3)-dependent NAD(+) synthetase (271 aa).

Gly-43 to Ser-50 lines the ATP pocket. Asp-49 contacts Mg(2+). Arg-137 contacts deamido-NAD(+). Thr-157 contributes to the ATP binding site. Glu-162 is a binding site for Mg(2+). Residues Lys-170 and Asp-177 each contribute to the deamido-NAD(+) site. Positions 186 and 208 each coordinate ATP. His-257–Lys-258 lines the deamido-NAD(+) pocket.

The protein belongs to the NAD synthetase family. As to quaternary structure, homodimer.

It catalyses the reaction deamido-NAD(+) + NH4(+) + ATP = AMP + diphosphate + NAD(+) + H(+). It functions in the pathway cofactor biosynthesis; NAD(+) biosynthesis; NAD(+) from deamido-NAD(+) (ammonia route): step 1/1. Its function is as follows. Catalyzes the ATP-dependent amidation of deamido-NAD to form NAD. Uses ammonia as a nitrogen source. The polypeptide is NH(3)-dependent NAD(+) synthetase (Exiguobacterium sp. (strain ATCC BAA-1283 / AT1b)).